The following is a 110-amino-acid chain: Integration host factor subunit alpha (110 aa).

It belongs to the bacterial histone-like protein family. In terms of assembly, heterodimer of an alpha and a beta chain.

Its function is as follows. This protein is one of the two subunits of integration host factor, a specific DNA-binding protein that functions in genetic recombination as well as in transcriptional and translational control. The polypeptide is Integration host factor subunit alpha (Bdellovibrio bacteriovorus (strain ATCC 15356 / DSM 50701 / NCIMB 9529 / HD100)).